The following is a 1008-amino-acid chain: Translation initiation factor IF-2 (1008 aa).

3 disordered regions span residues 113–136, 153–235, and 253–405; these read AVTA…KGNV, DKDS…PAAP, and GLTV…YRKD. 2 stretches are compositionally biased toward basic and acidic residues: residues 153-180 and 189-213; these read DKDS…KAKP and PKPE…KAET. Low complexity-rich tracts occupy residues 294–329 and 342–358; these read GPNK…PRPQ and GGPN…SNGP. Over residues 365–381 the composition is skewed to basic and acidic residues; it reads ASEKGEVTGKQIQDKIK. Positions 507 to 677 constitute a tr-type G domain; sequence DRAPIVTIMG…LLEAEMLELK (171 aa). Residues 516-523 are G1; that stretch reads GHVDHGKT. GTP is bound at residue 516–523; sequence GHVDHGKT. The segment at 541–545 is G2; that stretch reads GITQH. A G3 region spans residues 563–566; the sequence is DTPG. GTP-binding positions include 563–567 and 617–620; these read DTPGH and NKID. The tract at residues 617 to 620 is G4; the sequence is NKID. Residues 653–655 form a G5 region; it reads SAK.

The protein belongs to the TRAFAC class translation factor GTPase superfamily. Classic translation factor GTPase family. IF-2 subfamily.

Its subcellular location is the cytoplasm. One of the essential components for the initiation of protein synthesis. Protects formylmethionyl-tRNA from spontaneous hydrolysis and promotes its binding to the 30S ribosomal subunits. Also involved in the hydrolysis of GTP during the formation of the 70S ribosomal complex. This is Translation initiation factor IF-2 from Cytophaga hutchinsonii (strain ATCC 33406 / DSM 1761 / CIP 103989 / NBRC 15051 / NCIMB 9469 / D465).